The primary structure comprises 221 residues: Pleckstrin homology domain-containing family B member 2 (221 aa).

Positions 2-109 (AFVKSGWLLR…WKFTLQDSRT (108 aa)) constitute a PH domain. Lys-20 provides a ligand contact to a 1,2-diacyl-sn-glycero-3-phospho-L-serine.

As to expression, highly expressed in brain, retina, heart and kidney. Detected at lower levels in lung, muscle and nerve.

The protein localises to the recycling endosome membrane. Functionally, involved in retrograde transport of recycling endosomes. This is Pleckstrin homology domain-containing family B member 2 (Plekhb2) from Mus musculus (Mouse).